Reading from the N-terminus, the 309-residue chain is Porphobilinogen deaminase (309 aa).

C241 bears the S-(dipyrrolylmethanemethyl)cysteine mark.

Belongs to the HMBS family. As to quaternary structure, monomer. Dipyrromethane is required as a cofactor.

The enzyme catalyses 4 porphobilinogen + H2O = hydroxymethylbilane + 4 NH4(+). Its pathway is porphyrin-containing compound metabolism; protoporphyrin-IX biosynthesis; coproporphyrinogen-III from 5-aminolevulinate: step 2/4. In terms of biological role, tetrapolymerization of the monopyrrole PBG into the hydroxymethylbilane pre-uroporphyrinogen in several discrete steps. This Bacillus cereus (strain B4264) protein is Porphobilinogen deaminase.